Consider the following 244-residue polypeptide: Ribonuclease 3 (244 aa).

The RNase III domain occupies 17–146 (FEKKMQELNL…FVGALYLDQG (130 aa)). E59 serves as a coordination point for Mg(2+). D63 is an active-site residue. D132 and E135 together coordinate Mg(2+). E135 is an active-site residue. In terms of domain architecture, DRBM spans 172–241 (DFKTQFQEYV…AERAYKILKN (70 aa)).

It belongs to the ribonuclease III family. As to quaternary structure, homodimer. It depends on Mg(2+) as a cofactor.

The protein resides in the cytoplasm. The catalysed reaction is Endonucleolytic cleavage to 5'-phosphomonoester.. Its function is as follows. Digests double-stranded RNA. Involved in the processing of primary rRNA transcript to yield the immediate precursors to the large and small rRNAs (23S and 16S). Processes some mRNAs, and tRNAs when they are encoded in the rRNA operon. Processes pre-crRNA and tracrRNA of type II CRISPR loci if present in the organism. The sequence is that of Ribonuclease 3 from Staphylococcus saprophyticus subsp. saprophyticus (strain ATCC 15305 / DSM 20229 / NCIMB 8711 / NCTC 7292 / S-41).